A 236-amino-acid chain; its full sequence is 1-(5-phosphoribosyl)-5-[(5-phosphoribosylamino)methylideneamino] imidazole-4-carboxamide isomerase (236 aa).

The active-site Proton acceptor is the D8. D127 serves as the catalytic Proton donor.

This sequence belongs to the HisA/HisF family.

The protein resides in the cytoplasm. It catalyses the reaction 1-(5-phospho-beta-D-ribosyl)-5-[(5-phospho-beta-D-ribosylamino)methylideneamino]imidazole-4-carboxamide = 5-[(5-phospho-1-deoxy-D-ribulos-1-ylimino)methylamino]-1-(5-phospho-beta-D-ribosyl)imidazole-4-carboxamide. It participates in amino-acid biosynthesis; L-histidine biosynthesis; L-histidine from 5-phospho-alpha-D-ribose 1-diphosphate: step 4/9. The polypeptide is 1-(5-phosphoribosyl)-5-[(5-phosphoribosylamino)methylideneamino] imidazole-4-carboxamide isomerase (Campylobacter fetus subsp. fetus (strain 82-40)).